We begin with the raw amino-acid sequence, 225 residues long: MAAPTAAALSTLSTASVTSGKRFITSSFSLSFSSRPLATGVRAAGARAARRSAASASTVVATIAVGDKLPDATLSYFDPADGELKTVTVAELTAGRKAVLFAVPGAFTPTCSQKHLPGFIEKAGELHAKGVDAIACVSVNDAFVMRAWKESLGLGDADVLLLSDGNLELTRALGVEMDLSDKPMGLGVRSRRYALLADDGVVKVLNLEEGGAFTTSSAEEMLKAL.

The N-terminal 42 residues, 1–42, are a transit peptide targeting the chloroplast; sequence MAAPTAAALSTLSTASVTSGKRFITSSFSLSFSSRPLATGVR. One can recognise a Thioredoxin domain in the interval 63-225; the sequence is IAVGDKLPDA…SSAEEMLKAL (163 aa). Residue C111 is the Cysteine sulfenic acid (-SOH) intermediate of the active site.

The protein belongs to the peroxiredoxin family. Prx5 subfamily. Monomer.

Its subcellular location is the plastid. The protein localises to the chloroplast stroma. It carries out the reaction [glutaredoxin]-dithiol + a hydroperoxide = [glutaredoxin]-disulfide + an alcohol + H2O. In terms of biological role, thiol-specific peroxidase that catalyzes the reduction of hydrogen peroxide and organic hydroperoxides to water and alcohols, respectively. Plays a role in cell protection against oxidative stress by detoxifying peroxides. May be involved in chloroplast redox homeostasis. This Oryza sativa subsp. japonica (Rice) protein is Peroxiredoxin-2E-2, chloroplastic (PRXIIE-2).